We begin with the raw amino-acid sequence, 139 residues long: Sec-independent protein translocase protein TatB (139 aa).

A helical membrane pass occupies residues 1 to 21; that stretch reads MFDIGFTELLLVGLVALMVLG. Positions 69–139 are disordered; it reads LDLEREMKQS…PLRSDRPSEP (71 aa). Pro residues predominate over residues 80–95; the sequence is MPPPASNPAATPPSPP.

The protein belongs to the TatB family. As to quaternary structure, the Tat system comprises two distinct complexes: a TatABC complex, containing multiple copies of TatA, TatB and TatC subunits, and a separate TatA complex, containing only TatA subunits. Substrates initially bind to the TatABC complex, which probably triggers association of the separate TatA complex to form the active translocon.

It localises to the cell inner membrane. Part of the twin-arginine translocation (Tat) system that transports large folded proteins containing a characteristic twin-arginine motif in their signal peptide across membranes. Together with TatC, TatB is part of a receptor directly interacting with Tat signal peptides. TatB may form an oligomeric binding site that transiently accommodates folded Tat precursor proteins before their translocation. This chain is Sec-independent protein translocase protein TatB, found in Stutzerimonas stutzeri (strain A1501) (Pseudomonas stutzeri).